The chain runs to 400 residues: N(alpha)-acyl-glutamine aminoacylase (400 aa).

The protein belongs to the peptidase M20 family. It depends on Zn(2+) as a cofactor.

The enzyme catalyses an N(2)-acyl-L-glutamine + H2O = a carboxylate + L-glutamine. The catalysed reaction is N(2)-[(2E)-3-methylhex-2-enoyl]-L-glutaminate + H2O = (2E)-3-methylhex-2-enoate + L-glutamine. It carries out the reaction N(2)-(3-hydroxy-3-methylhexanoyl)-L-glutaminate + H2O = 3-hydroxy-3-methylhexanoate + L-glutamine. With respect to regulation, partial loss of activity with the combination Mn(2+) and chelating agents. Activity is lost in presence of 0.5 mM dithiothreitol. Its function is as follows. Hydrolyzes odorless N-alpha-acyl-L-glutamine conjugates of short- and medium-chain fatty acids, releasing human axillary malodor compounds. The enzyme is highly specific for the glutamine residue but has a low specificity for the acyl part of the substrate. The two most common products are 3-methyl-2-hexenoic acid (3M2H) and 3-hydroxy-3-methyl-hexanoic acid (HMHA), which are produced from the odorless precursors N-alpha-3-methyl-2-hexenoyl-L-glutamine (3M2H-Gln) and N-alpha-3-hydroxy-3-methylhexanoyl-L-glutamine (HMHA-Gln). In addition, over 28 different carboxylic acids contributing to human body odor are released by this enzyme from odorless axilla secretions, including several aliphatic 3-hydroxy acids with 4-Me branches, 3,4-unsaturated, 4-Et-branched aliphatic acids, and a variety of degradation products of amino acids. The chain is N(alpha)-acyl-glutamine aminoacylase from Corynebacterium striatum.